The following is a 293-amino-acid chain: Protease HtpX (293 aa).

2 helical membrane passes run 4–24 and 32–52; these read IALF…ILSL and VMGL…VSLL. Residue His139 coordinates Zn(2+). Glu140 is an active-site residue. A Zn(2+)-binding site is contributed by His143. The next 2 membrane-spanning stretches (helical) occupy residues 158–178 and 193–213; these read IVNT…AGFM and MVYF…ASTI. Position 222 (Glu222) interacts with Zn(2+).

This sequence belongs to the peptidase M48B family. Zn(2+) is required as a cofactor.

It is found in the cell inner membrane. The polypeptide is Protease HtpX (Erwinia tasmaniensis (strain DSM 17950 / CFBP 7177 / CIP 109463 / NCPPB 4357 / Et1/99)).